Here is an 843-residue protein sequence, read N- to C-terminus: MAKPLTDSEKRKQISVRGLAGLGDVAEVRKSFNRHLHFTLVKDRNVATPRDYLFALAHTVRDHLVGRWIRTQQHYYERDPKRIYYLSLEFYMGRTLQNTMVNLGLQNACDEAIYQLGLDLEELEEIEEDAGLGNGGLGRLAACFLDSMATLGLAAYGYGIRYEFGIFNQKIVNGWQVEEADDWLRYGNPWEKARPEYMLPVHFYGRVEHTPDGVKWLDTQVVLAMPYDTPVPGYKNNTVNTMRLWSAKAPNDFKLQDFNVGDYIEAVLDRNLAENISRVLYPNDNFFEGKELRLKQEYFVVAATLQDIIRRFKSSKFGCRDPVRTCFETFPDKVAIQLNDTHPALSIPELMRILVDVEKVDWDKAWEITKKTCAYTNHTVLPEALERWPVSMFEKLLPRHLEIIYAINQRHLDHVAALFPGDVDRLRRMSVIEEGDCKRINMAHLCVIGSHAVNGVARIHSEIVKQSVFKDFYELEPEKFQNKTNGITPRRWLLLCNPGLADTIVEKIGEEFLTDLSQLKKLLPLVNDEVFIRDVAKVKQENKLKFSAFLEKEYKVKINPSSMFDVHVKRIHEYKRQLLNCLHVVTLYNRIKRDPAKAFVPRTVMIGGKAAPGYHMAKLIIKLVTSIGDVVNHDPVVGDRLKVIFLENYRVSLAEKVIPAADLSQQISTAGAEASGTGNMKFMLNGALTIGTMDGANVEMAEEAGAENLFIFGLQVEDVEALDRKGYNAREYYDHLPELKQAVDQISSGFFSPKEPNCFKDIVNMLMHHDRFKVFADYEAYMQCQAQVDQLYRNPKEWTKKVIRNIACSGKFSSDRTITEYAREIWGVEPSDLQIPPPNVPRD.

An N-acetylalanine modification is found at Ala-2. Ser-15 is modified (phosphoserine; by PHK; in form phosphorylase A). AMP is bound by residues Asp-43, Tyr-197, and Arg-310. The residue at position 197 (Tyr-197) is a Phosphotyrosine. A Phosphotyrosine modification is found at Tyr-473. Residue Lys-569 participates in pyridoxal 5'-phosphate binding. The tract at residues 677–678 (TG) is pyridoxal 5'-phosphate. Residue Lys-681 is modified to N6-(pyridoxal phosphate)lysine.

This sequence belongs to the glycogen phosphorylase family. As to quaternary structure, homodimer. Dimers associate into a tetramer to form the enzymatically active phosphorylase A. Requires pyridoxal 5'-phosphate as cofactor. In terms of processing, phosphorylation of Ser-15 converts phosphorylase B (unphosphorylated) to phosphorylase A.

The enzyme catalyses [(1-&gt;4)-alpha-D-glucosyl](n) + phosphate = [(1-&gt;4)-alpha-D-glucosyl](n-1) + alpha-D-glucose 1-phosphate. With respect to regulation, activity of phosphorylase is controlled both by allosteric means (through the non-covalent binding of metabolites) and by covalent modification. Thus AMP allosterically activates, whereas ATP, ADP, and glucose-6-phosphate allosterically inhibit, phosphorylase B. In terms of biological role, glycogen phosphorylase that regulates glycogen mobilization. Phosphorylase is an important allosteric enzyme in carbohydrate metabolism. Enzymes from different sources differ in their regulatory mechanisms and in their natural substrates. However, all known phosphorylases share catalytic and structural properties. This Pongo abelii (Sumatran orangutan) protein is Glycogen phosphorylase, brain form (PYGB).